The chain runs to 391 residues: MTQVPNRETPRGIAILARFLASESAGGIVLMVAALAALIVANSPLSAGYFSILHSVWLGLSVELWINDGLMAIFFLMVGLEIKREVLAGGLASWGQRALPGFAAAGGMLVPALIYIAINWGNPQTLSGWAIPAATDIAFALGVLSLLGNRVPTSLKVFLAALAILDDLGAVTIIAFFYSAGLNLPMLAAAFVTLAVLIVMNRLNVRRLLPYLLLGALLWFFVLQSGVHATLAGVALALCIPMGKPEEEARSPLLFLEEKMHYWVAFAVVPIFGFANAGVSLAGITLGNLVDPVPLGVALGLFVGKQIGVFLAAVLAIRAGLAVLPEGSNWVQLYGVAMLCGIGFTMSLFIGNLAFPGSQHLIDEVKVGVLIGSGLAAIAGIVLLRSRFSRP.

Helical transmembrane passes span 25–45 (AGGIVLMVAALAALIVANSPL), 56–76 (VWLGLSVELWINDGLMAIFFL), 98–118 (ALPGFAAAGGMLVPALIYIAI), 128–148 (GWAIPAATDIAFALGVLSLLG), 157–177 (VFLAALAILDDLGAVTIIAFF), 180–200 (AGLNLPMLAAAFVTLAVLIVM), 208–228 (LLPYLLLGALLWFFVLQSGVH), 264–284 (VAFAVVPIFGFANAGVSLAGI), 297–317 (VALGLFVGKQIGVFLAAVLAI), 335–355 (GVAMLCGIGFTMSLFIGNLAF), and 364–384 (EVKVGVLIGSGLAAIAGIVLL).

The protein belongs to the NhaA Na(+)/H(+) (TC 2.A.33) antiporter family.

Its subcellular location is the cell inner membrane. It carries out the reaction Na(+)(in) + 2 H(+)(out) = Na(+)(out) + 2 H(+)(in). Its function is as follows. Na(+)/H(+) antiporter that extrudes sodium in exchange for external protons. The protein is Na(+)/H(+) antiporter NhaA 1 of Pseudomonas syringae pv. syringae (strain B728a).